The following is a 327-amino-acid chain: Olfactory receptor 6A2 (327 aa).

Over 1–26 the chain is Extracellular; sequence MEWRNHSGRVSEFVLLGFPAPAPLQV. Asn-5 carries N-linked (GlcNAc...) asparagine glycosylation. Residues 27–47 traverse the membrane as a helical segment; it reads LLFALLLLAYVLVLTENTLII. Residues 48–55 lie on the Cytoplasmic side of the membrane; it reads MAIRNHST. Residues 56 to 76 form a helical membrane-spanning segment; sequence LHKPMYFFLANMSFLEIWYVT. Residues 77-104 lie on the Extracellular side of the membrane; the sequence is VTIPKMLAGFVGSKQDHGQLISFEGCMT. Cysteines 102 and 194 form a disulfide. The chain crosses the membrane as a helical span at residues 105 to 125; sequence QLYFFLGLGCTECVLLAVMAY. The Cytoplasmic portion of the chain corresponds to 126 to 144; sequence DRYMAICYPLHYPVIVSGR. Residues 145–165 traverse the membrane as a helical segment; that stretch reads LCVQMAAGSWAGGFGISMVKV. Over 166-201 the chain is Extracellular; that stretch reads FLISGLSYCGPNIINHFFCDVSPLLNLSCTDMSTAE. Asn-191 carries N-linked (GlcNAc...) asparagine glycosylation. Residues 202–222 form a helical membrane-spanning segment; that stretch reads LTDFILAIFILLGPLSVTGAS. Topologically, residues 223–242 are cytoplasmic; that stretch reads YVAITGAVMHIPSAAGRYKA. A helical transmembrane segment spans residues 243–263; sequence FSTCASHLTVVIIFYAASIFI. Residues 264 to 276 are Extracellular-facing; the sequence is YARPKALSAFDTN. The helical transmembrane segment at 277-297 threads the bilayer; it reads KLVSVLYAVIVPLLNPIIYCL. The Cytoplasmic portion of the chain corresponds to 298-327; the sequence is RNQEVKRALCCTLHLYQHQDPDPKKASRNV.

It belongs to the G-protein coupled receptor 1 family.

Its subcellular location is the cell membrane. Odorant receptor. The polypeptide is Olfactory receptor 6A2 (OR6A2) (Homo sapiens (Human)).